A 334-amino-acid chain; its full sequence is Ethanol acetyltransferase 1 (334 aa).

The N-terminal 16 residues, 1–16, are a transit peptide targeting the mitochondrion; it reads MFASNVVVLNKRSIRF. Active-site charge relay system residues include Ser-124, Asp-148, and His-296.

It belongs to the AB hydrolase superfamily.

It localises to the mitochondrion. The enzyme catalyses ethanol + acetyl-CoA = ethyl acetate + CoA. It carries out the reaction acetyl-CoA + H2O = acetate + CoA + H(+). The catalysed reaction is ethyl acetate + H2O = ethanol + acetate + H(+). Functionally, alcohol acetyltransferase that catalyzes the synthesis of ethyl acetate from ethanol and acetyl-CoA. Can also function as a thioesterase by hydrolyzing acetyl-CoA in the absence of ethanol, as well as esterase hydrolyzing ethyl acetate. This is Ethanol acetyltransferase 1 (EAT1) from Hanseniaspora uvarum (Yeast).